A 755-amino-acid chain; its full sequence is Polyribonucleotide nucleotidyltransferase (755 aa).

Residues Asp482 and Asp488 each coordinate Mg(2+). Positions Pro549–Met608 constitute a KH domain. One can recognise an S1 motif domain in the interval Gly618–Arg686. The segment covering Asn702 to Tyr714 has biased composition (basic and acidic residues). Residues Asn702–Tyr755 form a disordered region. Residues Lys722 to His731 show a composition bias toward basic residues.

This sequence belongs to the polyribonucleotide nucleotidyltransferase family. Mg(2+) serves as cofactor.

Its subcellular location is the cytoplasm. The catalysed reaction is RNA(n+1) + phosphate = RNA(n) + a ribonucleoside 5'-diphosphate. Involved in mRNA degradation. Catalyzes the phosphorolysis of single-stranded polyribonucleotides processively in the 3'- to 5'-direction. The sequence is that of Polyribonucleotide nucleotidyltransferase from Wolbachia sp. subsp. Brugia malayi (strain TRS).